Consider the following 208-residue polypeptide: Uracil phosphoribosyltransferase (208 aa).

5-phospho-alpha-D-ribose 1-diphosphate is bound by residues Arg78, Arg103, and 130 to 138 (DPMLATGGS). Residues Ile193 and 198–200 (GDA) contribute to the uracil site. Asp199 contributes to the 5-phospho-alpha-D-ribose 1-diphosphate binding site.

This sequence belongs to the UPRTase family. Mg(2+) serves as cofactor.

The catalysed reaction is UMP + diphosphate = 5-phospho-alpha-D-ribose 1-diphosphate + uracil. It participates in pyrimidine metabolism; UMP biosynthesis via salvage pathway; UMP from uracil: step 1/1. Its activity is regulated as follows. Allosterically activated by GTP. Functionally, catalyzes the conversion of uracil and 5-phospho-alpha-D-ribose 1-diphosphate (PRPP) to UMP and diphosphate. The sequence is that of Uracil phosphoribosyltransferase from Escherichia coli O139:H28 (strain E24377A / ETEC).